Consider the following 350-residue polypeptide: Biotin synthase (350 aa).

The 228-residue stretch at Asn41–Arg268 folds into the Radical SAM core domain. Cys56, Cys60, and Cys63 together coordinate [4Fe-4S] cluster. 4 residues coordinate [2Fe-2S] cluster: Cys100, Cys131, Cys191, and Arg263.

It belongs to the radical SAM superfamily. Biotin synthase family. Homodimer. Requires [4Fe-4S] cluster as cofactor. It depends on [2Fe-2S] cluster as a cofactor.

The enzyme catalyses (4R,5S)-dethiobiotin + (sulfur carrier)-SH + 2 reduced [2Fe-2S]-[ferredoxin] + 2 S-adenosyl-L-methionine = (sulfur carrier)-H + biotin + 2 5'-deoxyadenosine + 2 L-methionine + 2 oxidized [2Fe-2S]-[ferredoxin]. It functions in the pathway cofactor biosynthesis; biotin biosynthesis; biotin from 7,8-diaminononanoate: step 2/2. Functionally, catalyzes the conversion of dethiobiotin (DTB) to biotin by the insertion of a sulfur atom into dethiobiotin via a radical-based mechanism. In Shewanella putrefaciens (strain CN-32 / ATCC BAA-453), this protein is Biotin synthase.